The following is a 92-amino-acid chain: MPKLEMMLLVLLILPLSYFDSAGGQAVKVDGHGDGMDRYLQRDDREARITCQPRGRSKWGRCCLTQMCGNFCCPRYGCRCVYRSGRGHGCSC.

The first 24 residues, 1–24 (MPKLEMMLLVLLILPLSYFDSAGG), serve as a signal peptide directing secretion. The propeptide occupies 25 to 45 (QAVKVDGHGDGMDRYLQRDDR). 4 disulfide bridges follow: cysteine 63-cysteine 72, cysteine 68-cysteine 80, cysteine 73-cysteine 90, and cysteine 78-cysteine 92.

The protein belongs to the conotoxin D superfamily. In terms of assembly, homodimer; disulfide-linked. Post-translationally, the homodimer contains 10 disulfide bonds. Expressed by the venom duct.

The protein localises to the secreted. Alpha-conotoxins act on postsynaptic membranes, they bind to the nicotinic acetylcholine receptors (nAChR) and thus inhibit them. Through its two C-terminal domains, this homodimeric protein would bind to two nAChR allosteric sites, located outside the nAChR C-loop of the principal binding face and at the adjacent binding interface in a clockwise direction. This toxin blocks both neuronal and muscular subtypes: human alpha-7/CHRNA7, human alpha-3-beta-2 (CHRNA3-CHRNB2), human alpha-4-beta-2 (CHRNA4-CHRNB2), mouse adult muscular subtype alpha-1-beta-1-delta-epsilon (CHRNA1-CHRNB1-CHRND-CHRNE), and mouse fetal muscular subtype alpha-1-beta-1-gamma-delta (CHRNA1-CHRNB1-CHRNG-CHRND). Shows different dissociation rates towards the different subtypes, with a very slow rate towards alpha-7 subtype (almost irreversible), followed by the adult muscular subtype, the fetal muscular subtype, alpha-3-beta-2 and alpha-4-beta-2 (almost entirely reversible within a few minutes of washing). The chain is Alpha-conotoxin FrXXA from Conus fergusoni (Ferguson's cone).